Here is a 557-residue protein sequence, read N- to C-terminus: Copine-6 (557 aa).

2 C2 domains span residues 1–127 (MSDP…TKPL) and 134–263 (NAGK…MQWD). Ca(2+)-binding residues include Asp167, Asp173, Asp229, Asp231, and Asp237. The linker region stretch occupies residues 244 to 303 (STFQEMQEGTANPGQEMQWDCINPKYRDKKKHYKSSGTVVLAQCTVEKVHTFLDYIMGGC). A VWFA domain is found at 306-526 (SFTVAIDFTA…ALAKCVLAEV (221 aa)).

Belongs to the copine family. In terms of assembly, interacts (via second C2 domain) with OS9 (via C-terminus); this interaction occurs in a calcium-dependent manner in vitro. May interact with NECAB1. It depends on Ca(2+) as a cofactor.

The protein localises to the cytoplasm. It is found in the cell membrane. The protein resides in the endosome. It localises to the cytoplasmic vesicle. Its subcellular location is the clathrin-coated vesicle. The protein localises to the perikaryon. It is found in the cell projection. The protein resides in the dendrite. Its function is as follows. Calcium-dependent phospholipid-binding protein that plays a role in calcium-mediated intracellular processes. Binds phospholipid membranes in a calcium-dependent manner. Plays a role in dendrite formation by melanocytes. The sequence is that of Copine-6 from Bos taurus (Bovine).